A 194-amino-acid chain; its full sequence is 4'-phosphooxetanocin A phosphatase (194 aa).

The 4'-phosphooxetanocin A site is built by R16 and W17. W17 serves as a coordination point for oxetanocin A. Residues H31, H66, and D67 each coordinate Mg(2+). Residues H75, S78, and K81 each contribute to the 4'-phosphooxetanocin A site. Residues H75 and S78 each contribute to the oxetanocin A site. D132 lines the Mg(2+) pocket.

Belongs to the 5DNU family. In terms of assembly, homodimer. Mg(2+) serves as cofactor. Requires Co(2+) as cofactor. It depends on Mn(2+) as a cofactor.

The enzyme catalyses 4'-phosphooxetanocin A + H2O = oxetanocin A + phosphate. Its function is as follows. Phosphohydrolase involved in the biosynthesis of oxetanocin A (OXT-A), a nucleoside analog with antitumor, antiviral and antibacterial properties. Catalyzes the hydrolysis of phosphooxetanocin A (OXT-A-P) to generate oxetanocin A (OXT-A) and a molecule of inorganic phosphate. Can also bind and hydrolyze OXT triphosphate (OXT-A-PPP) and OXT diphosphate (OXT-A-PP), and thus catalyze the sequential hydrolysis of tri-, di- and mono-phosphorylated oxetanocin A compounds, releasing one molecule of inorganic phosphate at a time. In vitro can also use dATP, dAMP and dADP. This chain is 4'-phosphooxetanocin A phosphatase, found in Priestia megaterium (Bacillus megaterium).